We begin with the raw amino-acid sequence, 299 residues long: Probable phosphate butyryltransferase (299 aa).

Belongs to the phosphate acetyltransferase and butyryltransferase family.

It catalyses the reaction butanoyl-CoA + phosphate = butanoyl phosphate + CoA. Functionally, catalyzes the conversion of butyryl-CoA through butyryl phosphate to butyrate. This is Probable phosphate butyryltransferase (yqiS) from Bacillus subtilis (strain 168).